Reading from the N-terminus, the 2626-residue chain is Unconventional myosin-IXa (2626 aa).

In terms of domain architecture, Ras-associating spans 14-112; sequence NEHTLRIYPG…YRFLLREKNL (99 aa). Residues 146–1017 form the Myosin motor domain; that stretch reads KDFDDLCSLP…ERQHLQDLLH (872 aa). Residues 175–195 form a helical membrane-spanning segment; the sequence is IYTYVGSILIAINPFKFLPIY. Residue 239–246 participates in ATP binding; sequence GESGSGKT. Ser755 carries the post-translational modification Phosphoserine. Positions 908-919 are actin-binding; the sequence is QAEPYFVKCIRS. 5 consecutive IQ domains span residues 1021–1041, 1043–1072, 1075–1104, 1116–1145, and 1139–1168; these read LRRI…QQFL, LRQA…EKDA, MASA…AAVI, RHRA…KIIL, and QRNK…ERLK. The interval 1022–1163 is neck or regulatory domain; that stretch reads RRIILLQRWF…RARQRYKALK (142 aa). A tail region spans residues 1164-2589; it reads EERLKETKLE…LKNVKNSPQK (1426 aa). Basic and acidic residues predominate over residues 1221–1240; the sequence is RESSMDFSKESPDKQQERGR. The disordered stretch occupies residues 1221 to 1276; that stretch reads RESSMDFSKESPDKQQERGRSQSGTDLQGDVIVRQRPKSLEDLHQKKVGRAKRESR. Ser1243 bears the Phosphoserine mark. At Thr1245 the chain carries Phosphothreonine. The residue at position 1259 (Ser1259) is a Phosphoserine. Residues 1265–1292 are a coiled coil; that stretch reads QKKVGRAKRESRRMRELEQAIFSLELLK. Positions 1266–1276 are enriched in basic residues; it reads KKVGRAKRESR. 2 positions are modified to phosphoserine: Ser1300 and Ser1318. Residues 1360 to 1375 show a composition bias toward polar residues; it reads PSTFTNPKFDSQNNAL. Residues 1360–1397 are disordered; sequence PSTFTNPKFDSQNNALSASSETSSTFSGKGASSDSEHL. Low complexity predominate over residues 1376 to 1386; the sequence is SASSETSSTFS. The stretch at 1493-1540 forms a coiled coil; sequence TVLKKLEKLNIEKEKRQKQLQQQNEKEMMEQIRQQTDILEKERKAFKT. 5 disordered regions span residues 1562-1602, 1618-1673, 1689-1726, 1765-1784, and 1872-1907; these read VERP…PPKD, SRTV…SRPI, GNPQ…RMAR, SELG…SEMT, and QYHP…KRGV. Basic and acidic residues-rich tracts occupy residues 1620–1632 and 1659–1669; these read TVKE…RMGT and HRSDDPSREGS. Over residues 1716–1726 the composition is skewed to basic residues; it reads PAHKKKARMAR. The span at 1772–1784 shows a compositional bias: polar residues; it reads SLGQASHSDSEMT. A compositionally biased stretch (basic and acidic residues) spans 1887 to 1899; it reads CRKEFKENKEPSP. Ser2016 is modified (phosphoserine). The segment at 2067-2116 adopts a Phorbol-ester/DAG-type zinc-finger fold; sequence GHMFKATQYSIPTYCEYCSSLIWIMDRASVCKLCKYACHKKCCLKTTAKC. The Rho-GAP domain occupies 2131 to 2319; that stretch reads VELSRLTSED…LIVVEQMNKY (189 aa). The disordered stretch occupies residues 2365–2385; it reads SGKGRLHRGSHPNPSSPVIVR. Phosphoserine is present on Ser2380. Residues 2408-2444 are a coiled coil; sequence TDQQQAAMQQEEKVLTEQIENLQKEKEELTFEMLVLE. A disordered region spans residues 2449–2527; the sequence is DDEALESEAS…NTTSSHGTRK (79 aa). Positions 2504–2522 are enriched in low complexity; the sequence is SLDSVSSSVSSCLSNTTSS. Position 2542 is a phosphoserine (Ser2542). The interval 2552 to 2614 is disordered; sequence PLGQAKSLED…TVDSDCSSTQ (63 aa).

Belongs to the TRAFAC class myosin-kinesin ATPase superfamily. Myosin family. Post-translationally, phosphorylated by ALPK1 following monosodium urate monohydrate (MSU)-induced inflammation. Expressed at high levels in brain, followed by testis and spleen. Expressed at very low levels, in kidney. Detected abundantly in brain and testis and at lower levels in adrenal gland, kidney, lung and spleen (at protein level). In adrenal gland it is mostly found in the medulla but not in the cortex. In brain, it is found in the cerebellum and the CA2-CA3 regions of the hippocampus.

Its subcellular location is the membrane. The protein resides in the cytoplasm. It is found in the synapse. The protein localises to the cell projection. It localises to the growth cone. Functionally, myosins are actin-based motor molecules with ATPase activity. Unconventional myosins serve in intracellular movements. Regulates Rho by stimulating it's GTPase activity in neurons. Required for the regulation of neurite branching and motor neuron axon guidance. This Rattus norvegicus (Rat) protein is Unconventional myosin-IXa (Myo9a).